A 61-amino-acid chain; its full sequence is MRKLKMMLCVMMLPLVVVGCTSKQSVSQCVKPPPPPAWIMQPPPDWQTPLNGIISPSGNDW.

An N-terminal signal peptide occupies residues 1–19 (MRKLKMMLCVMMLPLVVVG). Residue C20 is the site of N-palmitoyl cysteine attachment. A lipid anchor (S-diacylglycerol cysteine) is attached at C20.

This sequence belongs to the lambdalikevirus o-spanin family. As to quaternary structure, homodimer; disulfide-linked. Interacts (via C-terminus) with RZ (via C-terminus). Part of the spanin complex which spans the entire periplasmic space. The spanin complex is composed of spanin, inner membrane subunit and spanin, outer membrane subunit.

It is found in the cell outer membrane. Its function is as follows. Component of the spanin complex that disrupts the outer membrane and causes cell lysis during virus exit. The spanin complex conducts the final step in cell lysis by disrupting the outer membrane after holin and endolysin action have permeabilized the inner membrane and degraded the host peptidoglycans. This chain is Prophage outer membrane lipoprotein RzoR (rzoR), found in Escherichia coli (strain K12).